The primary structure comprises 245 residues: NAD-dependent protein deacetylase (245 aa).

Residues 1-245 (MIFVQQFEEV…EFVEGLSSIK (245 aa)) form the Deacetylase sirtuin-type domain. Residues Ala26, Thr30, Phe37, Arg38, Gln105, Ile107, Asp108, and His123 each contribute to the NAD(+) site. Phe37 lines the nicotinamide pocket. Nicotinamide contacts are provided by Ile107 and Asp108. His123 functions as the Proton acceptor in the catalytic mechanism. 4 residues coordinate Zn(2+): Cys131, Cys134, Cys151, and Cys154. NAD(+) is bound by residues Thr190, Ser191, Asn216, and Ile234.

The protein belongs to the sirtuin family. Class U subfamily. Zn(2+) is required as a cofactor.

The protein resides in the cytoplasm. It catalyses the reaction N(6)-acetyl-L-lysyl-[protein] + NAD(+) + H2O = 2''-O-acetyl-ADP-D-ribose + nicotinamide + L-lysyl-[protein]. Its function is as follows. NAD-dependent protein deacetylase which modulates the activities of several enzymes which are inactive in their acetylated form. The sequence is that of NAD-dependent protein deacetylase from Bacillus thuringiensis subsp. konkukian (strain 97-27).